Reading from the N-terminus, the 387-residue chain is Succinate--CoA ligase [ADP-forming] subunit beta (387 aa).

Residues 9-245 (KDLLESYGLK…KSQENAKELK (237 aa)) form the ATP-grasp domain. ATP is bound by residues lysine 46, 53–55 (GRG), glutamate 100, tyrosine 103, and glutamate 108. Residues asparagine 200 and aspartate 214 each contribute to the Mg(2+) site. Substrate contacts are provided by residues asparagine 265 and 322-324 (GIV).

This sequence belongs to the succinate/malate CoA ligase beta subunit family. As to quaternary structure, heterotetramer of two alpha and two beta subunits. Mg(2+) is required as a cofactor.

It catalyses the reaction succinate + ATP + CoA = succinyl-CoA + ADP + phosphate. The catalysed reaction is GTP + succinate + CoA = succinyl-CoA + GDP + phosphate. Its pathway is carbohydrate metabolism; tricarboxylic acid cycle; succinate from succinyl-CoA (ligase route): step 1/1. In terms of biological role, succinyl-CoA synthetase functions in the citric acid cycle (TCA), coupling the hydrolysis of succinyl-CoA to the synthesis of either ATP or GTP and thus represents the only step of substrate-level phosphorylation in the TCA. The beta subunit provides nucleotide specificity of the enzyme and binds the substrate succinate, while the binding sites for coenzyme A and phosphate are found in the alpha subunit. This chain is Succinate--CoA ligase [ADP-forming] subunit beta, found in Francisella tularensis subsp. tularensis (strain WY96-3418).